The sequence spans 257 residues: Diphthine synthase (257 aa).

S-adenosyl-L-methionine is bound by residues Leu-9, Asp-86, Val-89, 114 to 115 (SI), Leu-166, Ala-207, and His-232.

The protein belongs to the diphthine synthase family. As to quaternary structure, homodimer.

It carries out the reaction 2-[(3S)-amino-3-carboxypropyl]-L-histidyl-[translation elongation factor 2] + 3 S-adenosyl-L-methionine = diphthine-[translation elongation factor 2] + 3 S-adenosyl-L-homocysteine + 3 H(+). It participates in protein modification; peptidyl-diphthamide biosynthesis. In terms of biological role, S-adenosyl-L-methionine-dependent methyltransferase that catalyzes the trimethylation of the amino group of the modified target histidine residue in translation elongation factor 2 (EF-2), to form an intermediate called diphthine. The three successive methylation reactions represent the second step of diphthamide biosynthesis. The sequence is that of Diphthine synthase from Methanocella arvoryzae (strain DSM 22066 / NBRC 105507 / MRE50).